Here is a 350-residue protein sequence, read N- to C-terminus: Holliday junction branch migration complex subunit RuvB (350 aa).

The large ATPase domain (RuvB-L) stretch occupies residues 1 to 186; that stretch reads MAGHEEEDER…FGIPLRLDFY (186 aa). ATP contacts are provided by residues L25, R26, G67, K70, T71, T72, 133–135, R176, Y186, and R223; that span reads EDF. T71 serves as a coordination point for Mg(2+). The segment at 187-257 is small ATPAse domain (RuvB-S); sequence ETDELVQIVT…IADAALNRLE (71 aa). A head domain (RuvB-H) region spans residues 260–350; the sequence is GRGLDAMDRR…VQPDLWSDAP (91 aa). Positions 296, 315, and 320 each coordinate DNA.

This sequence belongs to the RuvB family. In terms of assembly, homohexamer. Forms an RuvA(8)-RuvB(12)-Holliday junction (HJ) complex. HJ DNA is sandwiched between 2 RuvA tetramers; dsDNA enters through RuvA and exits via RuvB. An RuvB hexamer assembles on each DNA strand where it exits the tetramer. Each RuvB hexamer is contacted by two RuvA subunits (via domain III) on 2 adjacent RuvB subunits; this complex drives branch migration. In the full resolvosome a probable DNA-RuvA(4)-RuvB(12)-RuvC(2) complex forms which resolves the HJ.

The protein localises to the cytoplasm. The enzyme catalyses ATP + H2O = ADP + phosphate + H(+). The RuvA-RuvB-RuvC complex processes Holliday junction (HJ) DNA during genetic recombination and DNA repair, while the RuvA-RuvB complex plays an important role in the rescue of blocked DNA replication forks via replication fork reversal (RFR). RuvA specifically binds to HJ cruciform DNA, conferring on it an open structure. The RuvB hexamer acts as an ATP-dependent pump, pulling dsDNA into and through the RuvAB complex. RuvB forms 2 homohexamers on either side of HJ DNA bound by 1 or 2 RuvA tetramers; 4 subunits per hexamer contact DNA at a time. Coordinated motions by a converter formed by DNA-disengaged RuvB subunits stimulates ATP hydrolysis and nucleotide exchange. Immobilization of the converter enables RuvB to convert the ATP-contained energy into a lever motion, pulling 2 nucleotides of DNA out of the RuvA tetramer per ATP hydrolyzed, thus driving DNA branch migration. The RuvB motors rotate together with the DNA substrate, which together with the progressing nucleotide cycle form the mechanistic basis for DNA recombination by continuous HJ branch migration. Branch migration allows RuvC to scan DNA until it finds its consensus sequence, where it cleaves and resolves cruciform DNA. The chain is Holliday junction branch migration complex subunit RuvB from Rhodospirillum rubrum (strain ATCC 11170 / ATH 1.1.1 / DSM 467 / LMG 4362 / NCIMB 8255 / S1).